Reading from the N-terminus, the 443-residue chain is UPF0656 protein C926.02 (443 aa).

It belongs to the UPF0656 family.

It is found in the cytoplasm. Its subcellular location is the nucleus. This Schizosaccharomyces pombe (strain 972 / ATCC 24843) (Fission yeast) protein is UPF0656 protein C926.02.